The primary structure comprises 183 residues: Glutathione-regulated potassium-efflux system ancillary protein KefG (183 aa).

The protein belongs to the NAD(P)H dehydrogenase (quinone) family. KefG subfamily. Interacts with KefB.

It is found in the cell inner membrane. It carries out the reaction a quinone + NADH + H(+) = a quinol + NAD(+). The enzyme catalyses a quinone + NADPH + H(+) = a quinol + NADP(+). Regulatory subunit of a potassium efflux system that confers protection against electrophiles. Required for full activity of KefB. The sequence is that of Glutathione-regulated potassium-efflux system ancillary protein KefG from Salmonella gallinarum (strain 287/91 / NCTC 13346).